Here is a 129-residue protein sequence, read N- to C-terminus: Small ribosomal subunit protein uS11 (129 aa).

The protein belongs to the universal ribosomal protein uS11 family. Part of the 30S ribosomal subunit. Interacts with proteins S7 and S18. Binds to IF-3.

Located on the platform of the 30S subunit, it bridges several disparate RNA helices of the 16S rRNA. Forms part of the Shine-Dalgarno cleft in the 70S ribosome. The chain is Small ribosomal subunit protein uS11 from Dinoroseobacter shibae (strain DSM 16493 / NCIMB 14021 / DFL 12).